We begin with the raw amino-acid sequence, 572 residues long: Urease subunit alpha (572 aa).

The Urease domain maps to 131–572; it reads GGIDAHIHFI…LPLAQRYFLF (442 aa). Ni(2+) contacts are provided by His136, His138, and Lys219. Residue Lys219 is modified to N6-carboxylysine. Residue His221 participates in substrate binding. Residues His248 and His274 each contribute to the Ni(2+) site. His322 serves as the catalytic Proton donor. Position 362 (Asp362) interacts with Ni(2+).

This sequence belongs to the metallo-dependent hydrolases superfamily. Urease alpha subunit family. As to quaternary structure, heterotrimer of UreA (gamma), UreB (beta) and UreC (alpha) subunits. Three heterotrimers associate to form the active enzyme. Ni cation is required as a cofactor. Post-translationally, carboxylation allows a single lysine to coordinate two nickel ions.

The protein localises to the cytoplasm. The enzyme catalyses urea + 2 H2O + H(+) = hydrogencarbonate + 2 NH4(+). It participates in nitrogen metabolism; urea degradation; CO(2) and NH(3) from urea (urease route): step 1/1. This Thermosynechococcus vestitus (strain NIES-2133 / IAM M-273 / BP-1) protein is Urease subunit alpha.